The following is a 441-amino-acid chain: Double-stranded RNA-binding protein 1 (441 aa).

DRBM domains lie at 1–71 (MYKS…HLSS), 86–155 (SYKS…SLPQ), and 169–237 (SYKN…HFED). Positions 69–88 (LSSLPLPPPPPPSENQSSYK) are disordered.

Its function is as follows. Binds double-stranded RNA. This is Double-stranded RNA-binding protein 1 (DRB1) from Oryza sativa subsp. japonica (Rice).